The primary structure comprises 303 residues: Pantothenate synthetase (303 aa).

Residues 1 to 21 (MIATGHGGAERRTTAGDGTAR) form a disordered region. Residue 48 to 55 (MGALHDGH) participates in ATP binding. H55 acts as the Proton donor in catalysis. Q79 contacts (R)-pantoate. Residue Q79 coordinates beta-alanine. 165-168 (GRKD) contributes to the ATP binding site. Q171 provides a ligand contact to (R)-pantoate. Position 202 to 205 (202 to 205 (ASSR)) interacts with ATP.

It belongs to the pantothenate synthetase family. Homodimer.

The protein localises to the cytoplasm. The catalysed reaction is (R)-pantoate + beta-alanine + ATP = (R)-pantothenate + AMP + diphosphate + H(+). Its pathway is cofactor biosynthesis; (R)-pantothenate biosynthesis; (R)-pantothenate from (R)-pantoate and beta-alanine: step 1/1. Its function is as follows. Catalyzes the condensation of pantoate with beta-alanine in an ATP-dependent reaction via a pantoyl-adenylate intermediate. This is Pantothenate synthetase from Acidothermus cellulolyticus (strain ATCC 43068 / DSM 8971 / 11B).